The sequence spans 208 residues: Uracil phosphoribosyltransferase (208 aa).

Residues Arg78, Arg103, and 130–138 (DPMLATGGS) each bind 5-phospho-alpha-D-ribose 1-diphosphate. Residues Ile193 and 198–200 (GDA) each bind uracil. Asp199 contacts 5-phospho-alpha-D-ribose 1-diphosphate.

It belongs to the UPRTase family. Requires Mg(2+) as cofactor.

The enzyme catalyses UMP + diphosphate = 5-phospho-alpha-D-ribose 1-diphosphate + uracil. It participates in pyrimidine metabolism; UMP biosynthesis via salvage pathway; UMP from uracil: step 1/1. Allosterically activated by GTP. Catalyzes the conversion of uracil and 5-phospho-alpha-D-ribose 1-diphosphate (PRPP) to UMP and diphosphate. This Yersinia pestis protein is Uracil phosphoribosyltransferase.